The chain runs to 278 residues: Glutamate racemase (278 aa).

Substrate contacts are provided by residues 13–14 and 45–46; these read DS and YG. The active-site Proton donor/acceptor is the cysteine 76. A substrate-binding site is contributed by 77–78; it reads NT. Catalysis depends on cysteine 185, which acts as the Proton donor/acceptor. 186–187 is a substrate binding site; that stretch reads TH.

Belongs to the aspartate/glutamate racemases family.

The enzyme catalyses L-glutamate = D-glutamate. It functions in the pathway cell wall biogenesis; peptidoglycan biosynthesis. In terms of biological role, provides the (R)-glutamate required for cell wall biosynthesis. This is Glutamate racemase from Gloeothece citriformis (strain PCC 7424) (Cyanothece sp. (strain PCC 7424)).